We begin with the raw amino-acid sequence, 584 residues long: uncharacterized protein (584 aa).

4 disordered regions span residues 151-188 (EHPP…DNDL), 222-243 (KRKE…SRAN), 399-418 (SETP…PPDF), and 433-584 (MQPS…AKSD). Positions 159–188 (TSSEKTRSENRERKKRWREQNEERNKDNDL) are enriched in basic and acidic residues. The span at 231–243 (LSQNQSSNASRAN) shows a compositional bias: low complexity. Composition is skewed to polar residues over residues 399–409 (SETPTPVSGNG), 433–453 (MQPS…SSEM), 483–500 (NAVT…SGSP), 511–531 (NYSQ…SSLP), and 572–584 (QRSS…AKSD).

This is an uncharacterized protein from Schizosaccharomyces pombe (strain 972 / ATCC 24843) (Fission yeast).